The chain runs to 193 residues: MEQHFLGCVKRAWDSAEVAPEPQPPPIVSSEDRGPWPLPLYPVLGEYSLDSCDLGLLSSPCWRLPGVYWQNGLSPGVQSTLEPSTAKPTEFSWPGTQKQQEAPVEEVGQAEEPDRLRLQQLPWSSPLHPWDRQQDTEVCDSGCLLERRHPPALQPWRHLPGFSDCLEWILRVGFAAFSVLWACCSRICGAKQP.

Polar residues predominate over residues 78-87 (QSTLEPSTAK). Residues 78–111 (QSTLEPSTAKPTEFSWPGTQKQQEAPVEEVGQAE) form a disordered region.

Widely expressed. Highly expressed in lymphocytes. Expressed in both resting CD4(+) and CD8(+) T-cells.

In terms of biological role, may act as a receptor for annexin II on marrow stromal cells to induce osteoclast formation. This chain is Annexin-2 receptor (ANXA2R), found in Homo sapiens (Human).